The following is a 363-amino-acid chain: G-protein coupled receptor 6 (363 aa).

The Extracellular portion of the chain corresponds to Met1–Pro75. Asn2 and Asn9 each carry an N-linked (GlcNAc...) asparagine glycan. The tract at residues Ala28–Pro51 is disordered. N-linked (GlcNAc...) asparagine glycosylation is present at Asn52. The helical transmembrane segment at Trp76 to Val95 threads the bilayer. Residues Ala96–Pro107 are Cytoplasmic-facing. Residues Met108–Val131 traverse the membrane as a helical segment. Topologically, residues Phe132–Leu143 are extracellular. The chain crosses the membrane as a helical span at residues Leu144–Val165. Residues Asp166–Val186 lie on the Cytoplasmic side of the membrane. A helical membrane pass occupies residues His187 to Leu206. Over Gly207–Leu231 the chain is Extracellular. Residues Ser232–Cys250 traverse the membrane as a helical segment. Residues Gln251 to Gly278 are Cytoplasmic-facing. A helical membrane pass occupies residues Val279–Gln305. Over Glu306 to Ile310 the chain is Extracellular. The helical transmembrane segment at Tyr311–Phe332 threads the bilayer. The Cytoplasmic segment spans residues Arg333 to Val363. Cys346 carries the S-palmitoyl cysteine lipid modification. A phosphoserine mark is found at Ser357, Ser359, and Ser361.

The protein belongs to the G-protein coupled receptor 1 family. In terms of tissue distribution, expressed in the brain, with a prominent distribution in striatum.

Its subcellular location is the cell membrane. Its function is as follows. Orphan receptor with constitutive G(s) signaling activity that activate cyclic AMP. Promotes neurite outgrowth and blocks myelin inhibition in neurons. This Rattus norvegicus (Rat) protein is G-protein coupled receptor 6 (Gpr6).